Consider the following 374-residue polypeptide: Acid phosphatase-like protein XcAP-1 (374 aa).

Positions 1 to 17 (TTIILLIAFAAIQLSKA) are cleaved as a signal peptide. Val25 is a binding site for serotonin. Disulfide bonds link Cys144–Cys372, Cys165–Cys219, and Cys345–Cys349. Residues Asp245, Asp249, Asn271, and Gln283 each contribute to the serotonin site.

The protein belongs to the histidine acid phosphatase family.

The protein resides in the secreted. Functionally, probably modulates blood feeding of fleas on vertebrate species by binding and sequestering different mediators involved in the host response. Binds biogenic amines: serotonin, adrenaline and noradrenaline. Binds leukotriene C4. Does not bind histamine, leukotriene B4, leukotriene D4, leukotriene E4, ADP, and stable analogs of thromboxane A2: U-46619 and cTXA2. The polypeptide is Acid phosphatase-like protein XcAP-1 (Xenopsylla cheopis (Oriental rat flea)).